A 708-amino-acid chain; its full sequence is Leukotoxin translocation ATP-binding protein LktB (708 aa).

One can recognise a Peptidase C39 domain in the interval 1–126 (MEANHQRNDL…ACYQGQLILV (126 aa)). Positions 155–437 (FLETLIVSIF…LAQLWQDFQQ (283 aa)) constitute an ABC transmembrane type-1 domain. Transmembrane regions (helical) follow at residues 159 to 179 (LIVS…FQVV), 192 to 212 (LNII…LSGL), 270 to 290 (ALTS…MWYY), 296 to 316 (LVIL…SPIL), and 389 to 409 (VMVI…LSIG). The ABC transporter domain maps to 469-704 (ISFKNIRFRY…SNGLYSYLHQ (236 aa)). 503 to 510 (GRSGSGKS) provides a ligand contact to ATP.

Belongs to the ABC transporter superfamily. Protein-1 exporter (TC 3.A.1.109) family. Homodimer.

Its subcellular location is the cell inner membrane. The enzyme catalyses ATP + H2O + proteinSide 1 = ADP + phosphate + proteinSide 2.. Its function is as follows. Part of the ABC transporter complex LktBD involved in leukotoxin export. Transmembrane domains (TMD) form a pore in the inner membrane and the ATP-binding domain (NBD) is responsible for energy generation. This chain is Leukotoxin translocation ATP-binding protein LktB (lktB), found in Mannheimia haemolytica (Pasteurella haemolytica).